The primary structure comprises 359 residues: Membrane-bound lytic murein transglycosylase C (359 aa).

A signal peptide spans 1–16; the sequence is MKKYLALALIAPLLIS. Cys-17 carries the N-palmitoyl cysteine lipid modification. Residue Cys-17 is the site of S-diacylglycerol cysteine attachment.

It belongs to the transglycosylase Slt family.

The protein localises to the cell outer membrane. It catalyses the reaction Exolytic cleavage of the (1-&gt;4)-beta-glycosidic linkage between N-acetylmuramic acid (MurNAc) and N-acetylglucosamine (GlcNAc) residues in peptidoglycan, from either the reducing or the non-reducing ends of the peptidoglycan chains, with concomitant formation of a 1,6-anhydrobond in the MurNAc residue.. In terms of biological role, murein-degrading enzyme. May play a role in recycling of muropeptides during cell elongation and/or cell division. The polypeptide is Membrane-bound lytic murein transglycosylase C (Shigella sonnei (strain Ss046)).